A 208-amino-acid chain; its full sequence is Small ribosomal subunit protein uS4 (208 aa).

One can recognise an S4 RNA-binding domain in the interval 95 to 159 (TIIDNIVYRA…LKKLIGSNIE (65 aa)).

The protein belongs to the universal ribosomal protein uS4 family. As to quaternary structure, part of the 30S ribosomal subunit. Contacts protein S5. The interaction surface between S4 and S5 is involved in control of translational fidelity.

In terms of biological role, one of the primary rRNA binding proteins, it binds directly to 16S rRNA where it nucleates assembly of the body of the 30S subunit. With S5 and S12 plays an important role in translational accuracy. In Borreliella afzelii (strain PKo) (Borrelia afzelii), this protein is Small ribosomal subunit protein uS4.